A 597-amino-acid chain; its full sequence is MTTPLSSYSTTVTNHHPTFSFESLNSISSNNSTRNNQSNSVNSLLYFNSSGSSMVSSSSDAAPTSISTTTTSTTSMTDASANADNQQVYTITEEDSINDINRKEQNSFSIQPNQTPTMLPTSSYTLQRPPGLHEYTSSISSISSTSSNSTSAPVSPALINYSPKHSRKPNSLNLNRNMKNLSLNLHDSTNGYTSPLPKSTNSNQPRGNFIMDSPSKKSTPVNRIGNNNGNDYINATLLQTPSITQTPTMPPPLSLAQGPPSSVGSESVYKFPLISNACLNYSAGDSDSEVESISMKQAAKNTIIPPMAPPFALQSKSSPLSTPPRLHSPLGVDRGLPISMSPIQSSLNQKFNNITLQTPLNSSFSINNDEATNFNNKNNKNNNNNSTATTTITNTILSTPQNVRYNSKKFHPPEELQESTSINAYPNGPKNVLNNLIYLYSDPAQGKIDINKFDLVINVAKECDNMSLQYMNQVPNQREYVYIPWSHNSNISKDLFQITNKIDQFFTNGRKILIHCQCGVSRSACVVVAFYMKKFQLGVNEAYELLKNGDQKYIDACDRICPNMNLIFELMEFGDKLNNNEISTQQLLMNSPPTINL.

Low complexity predominate over residues 55–81 (VSSSSDAAPTSISTTTTSTTSMTDASA). Disordered regions lie at residues 55–89 (VSSS…QQVY), 107–172 (SFSI…PNSL), and 188–228 (STNG…GNNN). The segment covering 107–126 (SFSIQPNQTPTMLPTSSYTL) has biased composition (polar residues). A compositionally biased stretch (low complexity) spans 136–151 (TSSISSISSTSSNSTS). 2 stretches are compositionally biased toward polar residues: residues 188–206 (STNG…NQPR) and 216–228 (KKST…GNNN). In terms of domain architecture, Tyrosine-protein phosphatase spans 428–579 (GPKNVLNNLI…LMEFGDKLNN (152 aa)). C516 acts as the Phosphocysteine intermediate in catalysis.

This sequence belongs to the protein-tyrosine phosphatase family. Non-receptor class dual specificity subfamily.

It carries out the reaction O-phospho-L-tyrosyl-[protein] + H2O = L-tyrosyl-[protein] + phosphate. The sequence is that of Probable tyrosine-protein phosphatase (CPP1) from Candida albicans (strain WO-1) (Yeast).